We begin with the raw amino-acid sequence, 621 residues long: DNA-directed RNA polymerase subunit gamma (621 aa).

The Mg(2+) site is built by aspartate 463, aspartate 465, and aspartate 467.

It belongs to the RNA polymerase beta' chain family. RpoC1 subfamily. As to quaternary structure, in cyanobacteria the RNAP catalytic core is composed of 2 alpha, 1 beta, 1 beta', 1 gamma and 1 omega subunit. When a sigma factor is associated with the core the holoenzyme is formed, which can initiate transcription. It depends on Mg(2+) as a cofactor.

The catalysed reaction is RNA(n) + a ribonucleoside 5'-triphosphate = RNA(n+1) + diphosphate. In terms of biological role, DNA-dependent RNA polymerase catalyzes the transcription of DNA into RNA using the four ribonucleoside triphosphates as substrates. The sequence is that of DNA-directed RNA polymerase subunit gamma from Nostoc commune.